The chain runs to 680 residues: Potassium-transporting ATPase ATP-binding subunit (680 aa).

4 helical membrane passes run 37-57, 69-89, 223-243, and 257-277; these read VIFV…LDVA, IAAW…VAEG, ILLS…WGLA, and ALLV…IGIA. Aspartate 307 functions as the 4-aspartylphosphate intermediate in the catalytic mechanism. Residues aspartate 344, glutamate 348, 375-382, and lysine 393 contribute to the ATP site; that span reads FTAETRLS. The Mg(2+) site is built by aspartate 516 and aspartate 520. The next 3 helical transmembrane spans lie at 586–606, 614–634, and 652–672; these read FAII…LNIM, AILS…PLAL, and LLVY…LIDL.

The protein belongs to the cation transport ATPase (P-type) (TC 3.A.3) family. Type IA subfamily. The system is composed of three essential subunits: KdpA, KdpB and KdpC.

The protein resides in the cell inner membrane. The catalysed reaction is K(+)(out) + ATP + H2O = K(+)(in) + ADP + phosphate + H(+). In terms of biological role, part of the high-affinity ATP-driven potassium transport (or Kdp) system, which catalyzes the hydrolysis of ATP coupled with the electrogenic transport of potassium into the cytoplasm. This subunit is responsible for energy coupling to the transport system and for the release of the potassium ions to the cytoplasm. The chain is Potassium-transporting ATPase ATP-binding subunit from Rhizobium meliloti (strain 1021) (Ensifer meliloti).